The chain runs to 680 residues: Probable oxidoreductase YoaE (680 aa).

The 58-residue stretch at 9-66 (NGIFKSVCSLDCPDQCGLLIHKKDGKIVKVQGDPDHPVTAGNICNKVRNMTERIYDEK) folds into the 4Fe-4S Mo/W bis-MGD-type domain. Positions 16, 20, 24, and 52 each coordinate [4Fe-4S] cluster.

It belongs to the prokaryotic molybdopterin-containing oxidoreductase family. Mo-bis(molybdopterin guanine dinucleotide) is required as a cofactor.

In Bacillus subtilis (strain 168), this protein is Probable oxidoreductase YoaE (yoaE).